The following is a 79-amino-acid chain: Pigment-dispersing hormone type 1 (79 aa).

Positions 1–22 (MRSAVVVALLVMVAMSLQLTAA) are cleaved as a signal peptide. Ala-76 carries the post-translational modification Alanine amide.

It belongs to the arthropod PDH family. As to expression, eyestalk.

Its subcellular location is the secreted. In terms of biological role, the pigment-dispersing hormone causes the migration of the distal retinal pigment into the proximal end of the pigment chromatophore cells and thus decreases the amount of light entering the retinulas. May also function as a neurotransmitter and/or neuromodulator. The sequence is that of Pigment-dispersing hormone type 1 (PDH1) from Penaeus vannamei (Whiteleg shrimp).